A 167-amino-acid polypeptide reads, in one-letter code: ATP synthase subunit delta, mitochondrial (167 aa).

The N-terminal 28 residues, 1–28 (MFRLSNYMLRKSQFPQGLVRAPFGIRGY), are a transit peptide targeting the mitochondrion.

The protein belongs to the ATPase epsilon chain family. In terms of assembly, F-type ATPases have 2 components, CF(1) - the catalytic core - and CF(0) - the membrane proton channel. CF(1) has five subunits: alpha(3), beta(3), gamma(1), delta(1), epsilon(1). CF(0) has three main subunits: a, b and c.

Its subcellular location is the mitochondrion. The protein resides in the mitochondrion inner membrane. Mitochondrial membrane ATP synthase (F(1)F(0) ATP synthase or Complex V) produces ATP from ADP in the presence of a proton gradient across the membrane which is generated by electron transport complexes of the respiratory chain. F-type ATPases consist of two structural domains, F(1) - containing the extramembraneous catalytic core, and F(0) - containing the membrane proton channel, linked together by a central stalk and a peripheral stalk. During catalysis, ATP turnover in the catalytic domain of F(1) is coupled via a rotary mechanism of the central stalk subunits to proton translocation. Part of the complex F(1) domain and of the central stalk which is part of the complex rotary element. Rotation of the central stalk against the surrounding alpha(3)beta(3) subunits leads to hydrolysis of ATP in three separate catalytic sites on the beta subunits. The sequence is that of ATP synthase subunit delta, mitochondrial (atp16) from Schizosaccharomyces pombe (strain 972 / ATCC 24843) (Fission yeast).